We begin with the raw amino-acid sequence, 292 residues long: Ribosomal protein L11 methyltransferase (292 aa).

Residues threonine 144, glycine 165, aspartate 187, and asparagine 229 each contribute to the S-adenosyl-L-methionine site.

This sequence belongs to the methyltransferase superfamily. PrmA family.

It localises to the cytoplasm. The enzyme catalyses L-lysyl-[protein] + 3 S-adenosyl-L-methionine = N(6),N(6),N(6)-trimethyl-L-lysyl-[protein] + 3 S-adenosyl-L-homocysteine + 3 H(+). Functionally, methylates ribosomal protein L11. This chain is Ribosomal protein L11 methyltransferase, found in Ectopseudomonas mendocina (strain ymp) (Pseudomonas mendocina).